The following is a 273-amino-acid chain: Ethanolamine ammonia-lyase small subunit (273 aa).

3 residues coordinate adenosylcob(III)alamin: Val164, Glu185, and Cys214.

It belongs to the EutC family. As to quaternary structure, the basic unit is a heterodimer which dimerizes to form tetramers. The heterotetramers trimerize; 6 large subunits form a core ring with 6 small subunits projecting outwards. The cofactor is adenosylcob(III)alamin.

The protein resides in the bacterial microcompartment. It catalyses the reaction ethanolamine = acetaldehyde + NH4(+). Its pathway is amine and polyamine degradation; ethanolamine degradation. In terms of biological role, catalyzes the deamination of various vicinal amino-alcohols to oxo compounds. Allows this organism to utilize ethanolamine as the sole source of nitrogen and carbon in the presence of external vitamin B12. The chain is Ethanolamine ammonia-lyase small subunit from Pseudomonas aeruginosa (strain LESB58).